The following is a 265-amino-acid chain: 5'-nucleotidase SurE (265 aa).

A divalent metal cation contacts are provided by aspartate 8, aspartate 9, serine 41, and asparagine 100.

This sequence belongs to the SurE nucleotidase family. A divalent metal cation is required as a cofactor.

It is found in the cytoplasm. It carries out the reaction a ribonucleoside 5'-phosphate + H2O = a ribonucleoside + phosphate. Nucleotidase that shows phosphatase activity on nucleoside 5'-monophosphates. The chain is 5'-nucleotidase SurE from Brevibacillus brevis (strain 47 / JCM 6285 / NBRC 100599).